We begin with the raw amino-acid sequence, 364 residues long: Chorismate synthase (364 aa).

The disordered stretch occupies residues 41–60; sequence MQHDLDRRRPGTSRYTTARR. 2 residues coordinate NADP(+): Arg48 and Arg54. FMN contacts are provided by residues 125–127, 238–239, Gly278, 293–297, and Arg319; these read RSS, NA, and KPTSS.

Belongs to the chorismate synthase family. In terms of assembly, homotetramer. FMNH2 is required as a cofactor.

The catalysed reaction is 5-O-(1-carboxyvinyl)-3-phosphoshikimate = chorismate + phosphate. The protein operates within metabolic intermediate biosynthesis; chorismate biosynthesis; chorismate from D-erythrose 4-phosphate and phosphoenolpyruvate: step 7/7. Functionally, catalyzes the anti-1,4-elimination of the C-3 phosphate and the C-6 proR hydrogen from 5-enolpyruvylshikimate-3-phosphate (EPSP) to yield chorismate, which is the branch point compound that serves as the starting substrate for the three terminal pathways of aromatic amino acid biosynthesis. This reaction introduces a second double bond into the aromatic ring system. The protein is Chorismate synthase of Shewanella sp. (strain ANA-3).